A 399-amino-acid polypeptide reads, in one-letter code: Phosphoglycerate kinase (399 aa).

Substrate is bound by residues 22–24, arginine 38, 61–64, arginine 120, and arginine 153; these read DFN and HLGR. ATP-binding positions include lysine 204, glutamate 326, and 352-355; that span reads GGDT.

This sequence belongs to the phosphoglycerate kinase family. As to quaternary structure, monomer.

It localises to the cytoplasm. The catalysed reaction is (2R)-3-phosphoglycerate + ATP = (2R)-3-phospho-glyceroyl phosphate + ADP. Its pathway is carbohydrate degradation; glycolysis; pyruvate from D-glyceraldehyde 3-phosphate: step 2/5. The chain is Phosphoglycerate kinase from Geotalea uraniireducens (strain Rf4) (Geobacter uraniireducens).